Consider the following 363-residue polypeptide: UDP-N-acetylglucosamine--N-acetylmuramyl-(pentapeptide) pyrophosphoryl-undecaprenol N-acetylglucosamine transferase (363 aa).

UDP-N-acetyl-alpha-D-glucosamine is bound by residues 12 to 14 (TAG), Arg-166, Ser-196, and Gln-291.

The protein belongs to the glycosyltransferase 28 family. MurG subfamily.

It localises to the cell inner membrane. The catalysed reaction is di-trans,octa-cis-undecaprenyl diphospho-N-acetyl-alpha-D-muramoyl-L-alanyl-D-glutamyl-meso-2,6-diaminopimeloyl-D-alanyl-D-alanine + UDP-N-acetyl-alpha-D-glucosamine = di-trans,octa-cis-undecaprenyl diphospho-[N-acetyl-alpha-D-glucosaminyl-(1-&gt;4)]-N-acetyl-alpha-D-muramoyl-L-alanyl-D-glutamyl-meso-2,6-diaminopimeloyl-D-alanyl-D-alanine + UDP + H(+). It participates in cell wall biogenesis; peptidoglycan biosynthesis. Cell wall formation. Catalyzes the transfer of a GlcNAc subunit on undecaprenyl-pyrophosphoryl-MurNAc-pentapeptide (lipid intermediate I) to form undecaprenyl-pyrophosphoryl-MurNAc-(pentapeptide)GlcNAc (lipid intermediate II). The protein is UDP-N-acetylglucosamine--N-acetylmuramyl-(pentapeptide) pyrophosphoryl-undecaprenol N-acetylglucosamine transferase of Legionella pneumophila (strain Lens).